The sequence spans 165 residues: Trypsin alpha-3 (165 aa).

Residues 1–163 (NSGGVLVSVA…LRSWVVSAAN (163 aa)) form the Peptidase S1 domain. The active-site Charge relay system is aspartate 26. 2 disulfide bridges follow: cysteine 89–cysteine 106 and cysteine 115–cysteine 139. Serine 119 acts as the Charge relay system in catalysis.

This sequence belongs to the peptidase S1 family.

It is found in the secreted. The protein resides in the extracellular space. It carries out the reaction Preferential cleavage: Arg-|-Xaa, Lys-|-Xaa.. This is Trypsin alpha-3 from Lucilia cuprina (Green bottle fly).